The primary structure comprises 355 residues: UDP-N-acetylglucosamine--N-acetylmuramyl-(pentapeptide) pyrophosphoryl-undecaprenol N-acetylglucosamine transferase (355 aa).

UDP-N-acetyl-alpha-D-glucosamine-binding positions include 13–15 (TGG), N125, R162, S190, I244, and Q289.

Belongs to the glycosyltransferase 28 family. MurG subfamily.

Its subcellular location is the cell inner membrane. It catalyses the reaction di-trans,octa-cis-undecaprenyl diphospho-N-acetyl-alpha-D-muramoyl-L-alanyl-D-glutamyl-meso-2,6-diaminopimeloyl-D-alanyl-D-alanine + UDP-N-acetyl-alpha-D-glucosamine = di-trans,octa-cis-undecaprenyl diphospho-[N-acetyl-alpha-D-glucosaminyl-(1-&gt;4)]-N-acetyl-alpha-D-muramoyl-L-alanyl-D-glutamyl-meso-2,6-diaminopimeloyl-D-alanyl-D-alanine + UDP + H(+). It functions in the pathway cell wall biogenesis; peptidoglycan biosynthesis. Functionally, cell wall formation. Catalyzes the transfer of a GlcNAc subunit on undecaprenyl-pyrophosphoryl-MurNAc-pentapeptide (lipid intermediate I) to form undecaprenyl-pyrophosphoryl-MurNAc-(pentapeptide)GlcNAc (lipid intermediate II). This is UDP-N-acetylglucosamine--N-acetylmuramyl-(pentapeptide) pyrophosphoryl-undecaprenol N-acetylglucosamine transferase from Neisseria gonorrhoeae (strain ATCC 700825 / FA 1090).